Here is a 296-residue protein sequence, read N- to C-terminus: Bifunctional protein FolD (296 aa).

NADP(+)-binding positions include 166–168 (GRS), S195, and T236.

It belongs to the tetrahydrofolate dehydrogenase/cyclohydrolase family. As to quaternary structure, homodimer.

The catalysed reaction is (6R)-5,10-methylene-5,6,7,8-tetrahydrofolate + NADP(+) = (6R)-5,10-methenyltetrahydrofolate + NADPH. It catalyses the reaction (6R)-5,10-methenyltetrahydrofolate + H2O = (6R)-10-formyltetrahydrofolate + H(+). It participates in one-carbon metabolism; tetrahydrofolate interconversion. Functionally, catalyzes the oxidation of 5,10-methylenetetrahydrofolate to 5,10-methenyltetrahydrofolate and then the hydrolysis of 5,10-methenyltetrahydrofolate to 10-formyltetrahydrofolate. The protein is Bifunctional protein FolD of Dehalococcoides mccartyi (strain ATCC BAA-2266 / KCTC 15142 / 195) (Dehalococcoides ethenogenes (strain 195)).